Consider the following 134-residue polypeptide: L-ectoine synthase (134 aa).

The protein belongs to the ectoine synthase family.

It catalyses the reaction (2S)-4-acetamido-2-aminobutanoate = L-ectoine + H2O. It functions in the pathway amine and polyamine biosynthesis; ectoine biosynthesis; L-ectoine from L-aspartate 4-semialdehyde: step 3/3. In terms of biological role, catalyzes the circularization of gamma-N-acetyl-alpha,gamma-diaminobutyric acid (ADABA) to ectoine (1,4,5,6-tetrahydro-2-methyl-4-pyrimidine carboxylic acid), which is an excellent osmoprotectant. This chain is L-ectoine synthase, found in Shouchella clausii (strain KSM-K16) (Alkalihalobacillus clausii).